A 104-amino-acid polypeptide reads, in one-letter code: Co-chaperonin GroES 1 (104 aa).

It belongs to the GroES chaperonin family. As to quaternary structure, heptamer of 7 subunits arranged in a ring. Interacts with the chaperonin GroEL.

It is found in the cytoplasm. Functionally, together with the chaperonin GroEL, plays an essential role in assisting protein folding. The GroEL-GroES system forms a nano-cage that allows encapsulation of the non-native substrate proteins and provides a physical environment optimized to promote and accelerate protein folding. GroES binds to the apical surface of the GroEL ring, thereby capping the opening of the GroEL channel. The polypeptide is Co-chaperonin GroES 1 (Mesorhizobium japonicum (strain LMG 29417 / CECT 9101 / MAFF 303099) (Mesorhizobium loti (strain MAFF 303099))).